The primary structure comprises 412 residues: Putative F-box protein At3g22940 (412 aa).

Positions 1-38 (MPLEEILSRLPLKSTRAVRSTCKKWDSLFKNRSFISKA) constitute an F-box domain.

The protein is Putative F-box protein At3g22940 of Arabidopsis thaliana (Mouse-ear cress).